Here is a 342-residue protein sequence, read N- to C-terminus: Manganese-dependent ADP-ribose/CDP-alcohol diphosphatase (342 aa).

Methionine 1 is subject to N-acetylmethionine. Zn(2+) is bound by residues aspartate 25, glutamine 27, aspartate 74, asparagine 110, histidine 241, histidine 278, and histidine 280.

This sequence belongs to the ADPRibase-Mn family. Monomer. Mg(2+) is required as a cofactor.

It carries out the reaction CDP-choline + H2O = phosphocholine + CMP + 2 H(+). The catalysed reaction is ADP-D-ribose + H2O = D-ribose 5-phosphate + AMP + 2 H(+). The enzyme catalyses CDP-glycerol + H2O = sn-glycerol 3-phosphate + CMP + 2 H(+). In terms of biological role, hydrolyzes ADP-ribose, IDP-ribose, CDP-glycerol, CDP-choline and CDP-ethanolamine, but not other non-reducing ADP-sugars or CDP-glucose. May be involved in immune cell signaling as suggested by the second-messenger role of ADP-ribose, which activates TRPM2 as a mediator of oxidative/nitrosative stress. The chain is Manganese-dependent ADP-ribose/CDP-alcohol diphosphatase (ADPRM) from Homo sapiens (Human).